The following is a 443-amino-acid chain: Nuclear pore complex-interacting protein family member B15 (443 aa).

A signal peptide spans 1–18 (MRLRFWLLIWLLLGFISH). Asn-111 carries an N-linked (GlcNAc...) asparagine glycan. Disordered stretches follow at residues 242 to 262 (RMGR…NSLS) and 330 to 413 (SPLP…TRHC). A compositionally biased stretch (polar residues) spans 252-262 (QQHSITDNSLS). The span at 351 to 393 (EAEKPPKPKRWRVDEVEQSPKPKRRRADEVEQSPKPKRQREAE) shows a compositional bias: basic and acidic residues. Basic residues predominate over residues 399-412 (KPKRRRLSKLRTRH).

The protein belongs to the NPIP family.

It localises to the secreted. This is Nuclear pore complex-interacting protein family member B15 (NPIPB15) from Homo sapiens (Human).